The primary structure comprises 191 residues: Small ribosomal subunit protein uS5 (191 aa).

Residues 1–21 (MAAERERGGRERSREREERDS) form a disordered region. One can recognise an S5 DRBM domain in the interval 23-86 (FVDKLVHINR…ESAKRNLTRV (64 aa)).

In terms of assembly, part of the 30S ribosomal subunit. Contacts proteins S4 and S8.

Functionally, with S4 and S12 plays an important role in translational accuracy. Its function is as follows. Located at the back of the 30S subunit body where it stabilizes the conformation of the head with respect to the body. This chain is Small ribosomal subunit protein uS5, found in Rhodopseudomonas palustris (strain ATCC BAA-98 / CGA009).